The primary structure comprises 299 residues: UDP-N-acetylenolpyruvoylglucosamine reductase (299 aa).

The region spanning 28-193 is the FAD-binding PCMH-type domain; sequence KVGGPADILA…LSAKFELQAG (166 aa). Residue arginine 172 is part of the active site. The active-site Proton donor is the serine 222. Glutamate 292 is an active-site residue.

It belongs to the MurB family. FAD serves as cofactor.

Its subcellular location is the cytoplasm. It catalyses the reaction UDP-N-acetyl-alpha-D-muramate + NADP(+) = UDP-N-acetyl-3-O-(1-carboxyvinyl)-alpha-D-glucosamine + NADPH + H(+). The protein operates within cell wall biogenesis; peptidoglycan biosynthesis. Cell wall formation. This Lactococcus lactis subsp. cremoris (strain SK11) protein is UDP-N-acetylenolpyruvoylglucosamine reductase.